A 554-amino-acid chain; its full sequence is Glypican-1 (554 aa).

An N-terminal signal peptide occupies residues 1 to 21; the sequence is MERLCWGWWWHLGILCLMHWA. Intrachain disulfides connect C32–C68, C62–C256, C69–C259, C191–C343, C246–C279, C268–C415, and C272–C401. N79 and N116 each carry an N-linked (GlcNAc...) asparagine glycan. The disordered stretch occupies residues 346–369; the sequence is PKKTNKGSKSEERRRKGKATQEDK. The segment covering 353–369 has biased composition (basic and acidic residues); the sequence is SKSEERRRKGKATQEDK. Residues S486, S488, and S490 are each glycosylated (O-linked (Xyl...) (heparan sulfate) serine).

Belongs to the glypican family. In terms of processing, O-glycosylated with heparan sulfate side chains.

Its subcellular location is the cell membrane. It is found in the secreted. The protein resides in the extracellular space. Its function is as follows. Cell surface proteoglycan that bears heparan sulfate. The protein is Glypican-1 (gpc1) of Xenopus tropicalis (Western clawed frog).